Here is a 78-residue protein sequence, read N- to C-terminus: MAGQRRGGRRRRKVDFIAANHIEYIDYKDTDLLRRFISERGKILPRRVTGTSAKNQRKLTIAIKRSRIMGLMPFVSEE.

Belongs to the bacterial ribosomal protein bS18 family. In terms of assembly, part of the 30S ribosomal subunit. Forms a tight heterodimer with protein bS6.

Functionally, binds as a heterodimer with protein bS6 to the central domain of the 16S rRNA, where it helps stabilize the platform of the 30S subunit. The polypeptide is Small ribosomal subunit protein bS18 (Levilactobacillus brevis (strain ATCC 367 / BCRC 12310 / CIP 105137 / JCM 1170 / LMG 11437 / NCIMB 947 / NCTC 947) (Lactobacillus brevis)).